The chain runs to 417 residues: MNINQINTKLIKPITPTPQNLKNYHISFLDQHVVKKYIAVVLYYQSAPDNGRLEDSLAETLVHFYPLAGRYIKTDLTVDCSDQGAEFIEAEARGDVRVTDLIGKTDTIHLCPEQYFGLDEGVDDPLLSIQVTRFSCGGATIAVSVSHRVFDVSSLETFLSAWSSASKTGGGVAPVIPSFALASLLPNKDEKFGLDSNKCQGKEQKIAVKRLLFEKRALTRLTSERTSGVRAACAVIAKALIRLDRTTHGKSRDFVVFQPINMRGRTGVPSPKNACGNMSFGSFTRRVSAKEEVGIGELVGLIGDGVRRGIAEYTEILCPDRDGRDVIIHVRNKNIKEVFKSETFVVSFTDWSKFGFYEVDFGWGRPIWSGVGPQRPRGNQTIMMRSKEGDGIEAWVHLNEDDMDLFEQDVEIKLFLS.

Active-site proton acceptor residues include His147 and Asp360.

It belongs to the plant acyltransferase family. As to quaternary structure, monomer. In terms of tissue distribution, expressed at higher level in recently opened, fully pigmented flowers.

It carries out the reaction 4'''-demalonylsalvianin + malonyl-CoA = salvianin + CoA. Its pathway is pigment biosynthesis; anthocyanin biosynthesis. With respect to regulation, inhibited by the following metal ions: Cd(2+), Cu(2+), Fe(2+), Hg(2+) and Zn(2+). Activity is strongly inhibited by CoA-SH and partially inhibited by acetyl-CoA, caffeic acid and bisdemalonylsalvianin. In terms of biological role, catalyzes the transfer of the malonyl group from malonyl-CoA to the 4'''-hydroxyl group of the 5-glucosyl moiety of anthocyanins. Anthocyanins are ubiquitous colored pigments that are responsible for petal color. In Salvia splendens (Scarlet sage), this protein is Pelargonidin 3-O-(6-caffeoylglucoside) 5-O-(6-O-malonylglucoside) 4'''-malonyltransferase.